The primary structure comprises 205 residues: Urease accessory protein UreG 1 (205 aa).

GTP is bound at residue 14 to 21 (GPVGSGKT).

It belongs to the SIMIBI class G3E GTPase family. UreG subfamily. In terms of assembly, homodimer. UreD, UreF and UreG form a complex that acts as a GTP-hydrolysis-dependent molecular chaperone, activating the urease apoprotein by helping to assemble the nickel containing metallocenter of UreC. The UreE protein probably delivers the nickel.

Its subcellular location is the cytoplasm. Facilitates the functional incorporation of the urease nickel metallocenter. This process requires GTP hydrolysis, probably effectuated by UreG. The sequence is that of Urease accessory protein UreG 1 from Methylobacterium radiotolerans (strain ATCC 27329 / DSM 1819 / JCM 2831 / NBRC 15690 / NCIMB 10815 / 0-1).